Reading from the N-terminus, the 216-residue chain is Probable nicotinate-nucleotide adenylyltransferase (216 aa).

This sequence belongs to the NadD family.

It catalyses the reaction nicotinate beta-D-ribonucleotide + ATP + H(+) = deamido-NAD(+) + diphosphate. It participates in cofactor biosynthesis; NAD(+) biosynthesis; deamido-NAD(+) from nicotinate D-ribonucleotide: step 1/1. Its function is as follows. Catalyzes the reversible adenylation of nicotinate mononucleotide (NaMN) to nicotinic acid adenine dinucleotide (NaAD). This is Probable nicotinate-nucleotide adenylyltransferase from Geotalea daltonii (strain DSM 22248 / JCM 15807 / FRC-32) (Geobacter daltonii).